We begin with the raw amino-acid sequence, 405 residues long: 3-isopropylmalate dehydrogenase 2, chloroplastic (405 aa).

A chloroplast-targeting transit peptide spans 1–33; the sequence is MAAALQTNIRTVKVPATFRAVSKQSLAPFRVRC. Phosphoserine is present on Ser-70. 114–129 provides a ligand contact to NAD(+); sequence IGGYKWDNNEKHLRPE. Positions 136, 146, and 174 each coordinate substrate. Asn-234 serves as a coordination point for NAD(+). Asp-264 is a substrate binding site. Residue Asp-264 coordinates Mg(2+). Position 265 (Asn-265) interacts with NAD(+). Asp-288 and Asp-292 together coordinate Mg(2+). 318-334 is an NAD(+) binding site; the sequence is EPIHGSAPDIAGQDKAN.

It belongs to the isocitrate and isopropylmalate dehydrogenases family. As to quaternary structure, homodimer. Requires Mg(2+) as cofactor. It depends on Mn(2+) as a cofactor. As to expression, expressed at low levels in seedlings, cotyledons, hypocotyls, flowers, roots, pollen, leaves and stems.

The protein resides in the plastid. It localises to the chloroplast stroma. It carries out the reaction (2R,3S)-3-isopropylmalate + NAD(+) = 4-methyl-2-oxopentanoate + CO2 + NADH. It participates in amino-acid biosynthesis; L-leucine biosynthesis; L-leucine from 3-methyl-2-oxobutanoate: step 3/4. With respect to regulation, regulated by a thiol-based redox modification. Its function is as follows. Involved in leucine biosynthesis; catalyzes the oxidative decarboxylation step in leucine biosynthesis (primary metabolism). Catalyzes the oxidation of 3-carboxy-2-hydroxy-4-methylpentanoate (3-isopropylmalate, 3-IPM) to 3-carboxy-4-methyl-2-oxopentanoate. The product decarboxylates to 4-methyl-2 oxopentanoate. Required during pollen development and involved in embryo sac development. The protein is 3-isopropylmalate dehydrogenase 2, chloroplastic of Arabidopsis thaliana (Mouse-ear cress).